We begin with the raw amino-acid sequence, 799 residues long: Cadherin-8 (799 aa).

The signal sequence occupies residues 1–29 (MPERLAETLLDLWTPLIILWITLPSFVYM). Residues 30–61 (APMNQAHVLTTGSPLELSRQSEEMRILNRSKR) constitute a propeptide that is removed on maturation. 5 Cadherin domains span residues 62-167 (GWVW…APEF), 168-276 (LNGP…PPKF), 277-391 (AQSL…PPVF), 392-494 (SSPT…DNAP), and 495-616 (EFAS…YVLP). The Extracellular portion of the chain corresponds to 62 to 621 (GWVWNQMFVL…PYVLPIGLSM (560 aa)). Asn188 carries an N-linked (GlcNAc...) asparagine glycan. Residues Asn463, Asn473, and Asn544 are each glycosylated (N-linked (GlcNAc...) asparagine). Residues 622-642 (GALIAILACIILLLVIVVLFV) traverse the membrane as a helical segment. The Cytoplasmic segment spans residues 643–799 (TLRRHKNEPL…YSVGESDKET (157 aa)). Residue Ser795 is modified to Phosphoserine.

It is found in the cell membrane. Its function is as follows. Cadherins are calcium-dependent cell adhesion proteins. They preferentially interact with themselves in a homophilic manner in connecting cells; cadherins may thus contribute to the sorting of heterogeneous cell types. The chain is Cadherin-8 (Cdh8) from Rattus norvegicus (Rat).